The chain runs to 391 residues: Elongation factor Tu (391 aa).

Residues 10–201 (KPHVNIGTIG…AVDSYIPTPE (192 aa)) form the tr-type G domain. The interval 19–26 (GHVDHGKT) is G1. 19 to 26 (GHVDHGKT) lines the GTP pocket. Threonine 26 contributes to the Mg(2+) binding site. The G2 stretch occupies residues 55 to 59 (GITIS). Positions 76–79 (DCPG) are G3. GTP is bound by residues 76–80 (DCPGH) and 131–134 (NKCD). Residues 131-134 (NKCD) are G4. The interval 169–171 (SAL) is G5.

It belongs to the TRAFAC class translation factor GTPase superfamily. Classic translation factor GTPase family. EF-Tu/EF-1A subfamily. In terms of assembly, monomer.

The protein localises to the cytoplasm. It catalyses the reaction GTP + H2O = GDP + phosphate + H(+). Its function is as follows. GTP hydrolase that promotes the GTP-dependent binding of aminoacyl-tRNA to the A-site of ribosomes during protein biosynthesis. The polypeptide is Elongation factor Tu (Brucella canis (strain ATCC 23365 / NCTC 10854 / RM-666)).